A 399-amino-acid polypeptide reads, in one-letter code: 1-deoxy-D-xylulose 5-phosphate reductoisomerase (399 aa).

Positions 13, 14, 15, 16, and 127 each coordinate NADPH. Lys-128 serves as a coordination point for 1-deoxy-D-xylulose 5-phosphate. Glu-129 lines the NADPH pocket. Asp-153 serves as a coordination point for Mn(2+). 4 residues coordinate 1-deoxy-D-xylulose 5-phosphate: Ser-154, Glu-155, Ser-187, and His-210. Mn(2+) is bound at residue Glu-155. Residue Gly-216 coordinates NADPH. Residues Ser-223, Asn-228, Lys-229, and Glu-232 each contribute to the 1-deoxy-D-xylulose 5-phosphate site. Glu-232 provides a ligand contact to Mn(2+).

The protein belongs to the DXR family. The cofactor is Mg(2+). Requires Mn(2+) as cofactor.

The catalysed reaction is 2-C-methyl-D-erythritol 4-phosphate + NADP(+) = 1-deoxy-D-xylulose 5-phosphate + NADPH + H(+). It participates in isoprenoid biosynthesis; isopentenyl diphosphate biosynthesis via DXP pathway; isopentenyl diphosphate from 1-deoxy-D-xylulose 5-phosphate: step 1/6. In terms of biological role, catalyzes the NADPH-dependent rearrangement and reduction of 1-deoxy-D-xylulose-5-phosphate (DXP) to 2-C-methyl-D-erythritol 4-phosphate (MEP). The polypeptide is 1-deoxy-D-xylulose 5-phosphate reductoisomerase (Bordetella petrii (strain ATCC BAA-461 / DSM 12804 / CCUG 43448)).